The following is a 101-amino-acid chain: Large ribosomal subunit protein uL23 (101 aa).

Belongs to the universal ribosomal protein uL23 family. In terms of assembly, part of the 50S ribosomal subunit. Contacts protein L29, and trigger factor when it is bound to the ribosome.

Its function is as follows. One of the early assembly proteins it binds 23S rRNA. One of the proteins that surrounds the polypeptide exit tunnel on the outside of the ribosome. Forms the main docking site for trigger factor binding to the ribosome. The sequence is that of Large ribosomal subunit protein uL23 from Corynebacterium efficiens (strain DSM 44549 / YS-314 / AJ 12310 / JCM 11189 / NBRC 100395).